A 351-amino-acid chain; its full sequence is Probable dual-specificity RNA methyltransferase RlmN (351 aa).

Catalysis depends on glutamate 92, which acts as the Proton acceptor. Positions 98–334 (SGDRLTVCVS…VRWSKGLGAD (237 aa)) constitute a Radical SAM core domain. An intrachain disulfide couples cysteine 105 to cysteine 337. Cysteine 112, cysteine 116, and cysteine 119 together coordinate [4Fe-4S] cluster. S-adenosyl-L-methionine contacts are provided by residues 159-160 (GE), serine 189, 218-220 (SLH), and asparagine 294. Cysteine 337 functions as the S-methylcysteine intermediate in the catalytic mechanism.

Belongs to the radical SAM superfamily. RlmN family. The cofactor is [4Fe-4S] cluster.

It is found in the cytoplasm. It carries out the reaction adenosine(2503) in 23S rRNA + 2 reduced [2Fe-2S]-[ferredoxin] + 2 S-adenosyl-L-methionine = 2-methyladenosine(2503) in 23S rRNA + 5'-deoxyadenosine + L-methionine + 2 oxidized [2Fe-2S]-[ferredoxin] + S-adenosyl-L-homocysteine. It catalyses the reaction adenosine(37) in tRNA + 2 reduced [2Fe-2S]-[ferredoxin] + 2 S-adenosyl-L-methionine = 2-methyladenosine(37) in tRNA + 5'-deoxyadenosine + L-methionine + 2 oxidized [2Fe-2S]-[ferredoxin] + S-adenosyl-L-homocysteine. Specifically methylates position 2 of adenine 2503 in 23S rRNA and position 2 of adenine 37 in tRNAs. The protein is Probable dual-specificity RNA methyltransferase RlmN of Synechococcus sp. (strain ATCC 27144 / PCC 6301 / SAUG 1402/1) (Anacystis nidulans).